Here is a 187-residue protein sequence, read N- to C-terminus: MVRLIVGLGNPGPAYDRTRHNAGFWFIDRLAAAHGCVLREESRFHGRVGAINLTEPVHLLAPLTFMNRSGLAVAAMARFYKIAPEHILVVHDELDFGPGVVRIKRDGGHGGHNGLRDIMAQLGSGGFLRLRIGIGRPAGSMAVADYVLAAPSVSDRQAISGAIEKALACLSELLAGHVEQVMNRLHV.

Y15 provides a ligand contact to tRNA. H20 functions as the Proton acceptor in the catalytic mechanism. The tRNA site is built by F65, N67, and N113.

This sequence belongs to the PTH family. As to quaternary structure, monomer.

The protein localises to the cytoplasm. It carries out the reaction an N-acyl-L-alpha-aminoacyl-tRNA + H2O = an N-acyl-L-amino acid + a tRNA + H(+). Functionally, hydrolyzes ribosome-free peptidyl-tRNAs (with 1 or more amino acids incorporated), which drop off the ribosome during protein synthesis, or as a result of ribosome stalling. Catalyzes the release of premature peptidyl moieties from peptidyl-tRNA molecules trapped in stalled 50S ribosomal subunits, and thus maintains levels of free tRNAs and 50S ribosomes. The protein is Peptidyl-tRNA hydrolase of Methylococcus capsulatus (strain ATCC 33009 / NCIMB 11132 / Bath).